Reading from the N-terminus, the 683-residue chain is Amphiphysin (683 aa).

Coiled coils occupy residues 10-83 and 144-191; these read AKNV…SLHE and DYDS…QEEL. The 217-residue stretch at 24 to 240 folds into the BAR domain; it reads VLQKLGKADE…MTKLGDQHAD (217 aa). 3 disordered regions span residues 244-311, 421-443, and 455-599; these read SIQG…KVTP, AETE…AAAP, and EPKE…ASLS. Ser-252 carries the post-translational modification Phosphoserine. Thr-260 carries the post-translational modification Phosphothreonine. A compositionally biased stretch (pro residues) spans 261-274; that stretch reads PSPPEEASPLPSPT. 4 positions are modified to phosphoserine: Ser-262, Ser-268, Ser-272, and Ser-276. Thr-280 carries the post-translational modification Phosphothreonine. Low complexity-rich tracts occupy residues 424–443 and 468–477; these read EQAL…AAAP and AGETVGTEGS. Ser-496 carries the phosphoserine modification. The segment covering 539–559 has biased composition (basic and acidic residues); it reads SNHEGEEHQETTTGTETREAT. Over residues 585–596 the composition is skewed to low complexity; it reads AATPAPAGAVDA. An SH3 domain is found at 610–683; sequence GFLYKVETLH…FPENFTRHLE (74 aa). Ser-626 bears the Phosphoserine mark.

In terms of assembly, heterodimer with BIN1. Binds SH3GLB1. Interacts with REPS1 and SGIP1. Binds AP2A2. Interacts with AP2B1. Interacts with DNM1 and SYNJ1.

The protein localises to the cytoplasmic vesicle. It is found in the secretory vesicle. Its subcellular location is the synaptic vesicle membrane. It localises to the cytoplasm. The protein resides in the cytoskeleton. May participate in mechanisms of regulated exocytosis in synapses and certain endocrine cell types. May control the properties of the membrane associated cytoskeleton. The protein is Amphiphysin (Amph) of Rattus norvegicus (Rat).